Consider the following 286-residue polypeptide: Pheromone receptor transcription factor (286 aa).

Ser-2 carries the N-acetylserine modification. Ser-2 is subject to Phosphoserine. In terms of domain architecture, MADS-box spans 18–72; it reads RRKIEIKFIENKTRRHVTFSKRKHGIMKKAFELSVLTGTQVLLLVVSETGLVYTF. The span at 97-119 shows a compositional bias: acidic residues; that stretch reads PDDEEEDEEEDGDDDDDDDDDGN. Residues 97-137 are disordered; sequence PDDEEEDEEEDGDDDDDDDDDGNDMQRQQPQQQQPQQQQQV. The segment covering 122–136 has biased composition (low complexity); sequence QRQQPQQQQPQQQQQ. Position 144 is a phosphoserine (Ser-144). The disordered stretch occupies residues 167 to 264; that stretch reads LGGANPNQNS…QQAFANAASP (98 aa). Positions 171–246 are enriched in low complexity; it reads NPNQNSMIQQ…QQQQQQQQQP (76 aa).

Homodimer. Binds DNA with a high specificity in complex with mating-type protein ALPHA1. Also binds DNA with a high specificity as a heterotetramer consisting of an ALPHA2 dimer and an MCM1 dimer. Interacts with YHP1 and YOX1, possibly leading to its inactivation. Interacts with ARG80 and ARG82.

It localises to the nucleus. Its function is as follows. Transcription factor required for the efficient replication of minichromosomes and the transcriptional regulation of early cell cycle genes. Activates transcription of ECB-dependent genes during the G1/M phase. Genes that contain a ECB (early cell box) element in their transcription regulatory region are transcribed only during G1/M phases. Interacts with the alpha-2 repressor or with the alpha-1 activator thereby regulating the expression of mating-type-specific genes. With ARG80, ARG81 and ARG82, coordinates the expression of arginine anabolic and catabolic genes in response to arginine. The sequence is that of Pheromone receptor transcription factor (MCM1) from Saccharomyces cerevisiae (strain ATCC 204508 / S288c) (Baker's yeast).